The sequence spans 354 residues: NADH-quinone oxidoreductase subunit H (354 aa).

The next 8 membrane-spanning stretches (helical) occupy residues 22–42 (ILIR…YLIL), 91–111 (YLIA…VIPF), 124–144 (LLYV…AGWA), 168–188 (MGFA…SAIV), 203–223 (VLSW…ISGV), 255–275 (LFFL…ALLF), 291–311 (IPGF…FIWI), and 326–346 (LGWK…AIWI).

It belongs to the complex I subunit 1 family. As to quaternary structure, NDH-1 is composed of 14 different subunits. Subunits NuoA, H, J, K, L, M, N constitute the membrane sector of the complex.

The protein localises to the cell inner membrane. It carries out the reaction a quinone + NADH + 5 H(+)(in) = a quinol + NAD(+) + 4 H(+)(out). NDH-1 shuttles electrons from NADH, via FMN and iron-sulfur (Fe-S) centers, to quinones in the respiratory chain. The immediate electron acceptor for the enzyme in this species is believed to be ubiquinone. Couples the redox reaction to proton translocation (for every two electrons transferred, four hydrogen ions are translocated across the cytoplasmic membrane), and thus conserves the redox energy in a proton gradient. This subunit may bind ubiquinone. This chain is NADH-quinone oxidoreductase subunit H, found in Cupriavidus pinatubonensis (strain JMP 134 / LMG 1197) (Cupriavidus necator (strain JMP 134)).